The following is a 273-amino-acid chain: MKSPTGVLNIDVMEKRDKTVPIKVYHKDALKVTQPIYLDKYGRAYYYIMNSGGGYLKGDFYSININVGKDAKTYITSQSATKVYKTPNSYALQELNFYIGQNAAMEYLPDPLIMYKDAAYKQKTNIYMQNNSTLILCDSVTPGWSPNMEKFTYQYFDSLTKIYMENKLVVYDHLLLNPFKESLDQMGILNQYSHYGTFIVINENVTNDLIAALKTSFSNTNNMKIGIASTTCKGFVIRILSHNTEDMESIFFQCHRFVRENCLHEELTSYRKY.

The protein belongs to the UreD family. As to quaternary structure, ureD, UreF and UreG form a complex that acts as a GTP-hydrolysis-dependent molecular chaperone, activating the urease apoprotein by helping to assemble the nickel containing metallocenter of UreC. The UreE protein probably delivers the nickel.

It is found in the cytoplasm. Its function is as follows. Required for maturation of urease via the functional incorporation of the urease nickel metallocenter. The sequence is that of Urease accessory protein UreD from Bacillus cereus (strain ATCC 10987 / NRS 248).